A 192-amino-acid polypeptide reads, in one-letter code: Endoribonuclease YbeY (192 aa).

Zn(2+)-binding residues include H109, H113, and H119. The disordered stretch occupies residues 142–192; it reads VGAALREGGPARAAETETSWTRSPTSTSTRSPSGSTARGTRARSSRAGSGR. Low complexity predominate over residues 159-180; it reads TSWTRSPTSTSTRSPSGSTARG.

This sequence belongs to the endoribonuclease YbeY family. Zn(2+) is required as a cofactor.

It localises to the cytoplasm. Functionally, single strand-specific metallo-endoribonuclease involved in late-stage 70S ribosome quality control and in maturation of the 3' terminus of the 16S rRNA. The protein is Endoribonuclease YbeY of Anaeromyxobacter sp. (strain Fw109-5).